A 295-amino-acid polypeptide reads, in one-letter code: uncharacterized protein (295 aa).

The first 26 residues, 1–26 (MKKYLALAAIVAICALWLTQNSNFEA), serve as a signal peptide directing secretion.

This is an uncharacterized protein from Archaeoglobus fulgidus (strain ATCC 49558 / DSM 4304 / JCM 9628 / NBRC 100126 / VC-16).